A 43-amino-acid polypeptide reads, in one-letter code: Cytochrome b559 subunit beta (43 aa).

Residues 18–34 (WLAVHGLAIPTVFFLGG) traverse the membrane as a helical segment. A heme-binding site is contributed by His22.

The protein belongs to the PsbE/PsbF family. As to quaternary structure, heterodimer of an alpha subunit and a beta subunit. PSII is composed of 1 copy each of membrane proteins PsbA, PsbB, PsbC, PsbD, PsbE, PsbF, PsbH, PsbI, PsbJ, PsbK, PsbL, PsbM, PsbT, PsbX, PsbY, PsbZ, Psb30/Ycf12, at least 3 peripheral proteins of the oxygen-evolving complex and a large number of cofactors. It forms dimeric complexes. Heme b serves as cofactor.

The protein localises to the plastid. It localises to the chloroplast thylakoid membrane. This b-type cytochrome is tightly associated with the reaction center of photosystem II (PSII). PSII is a light-driven water:plastoquinone oxidoreductase that uses light energy to abstract electrons from H(2)O, generating O(2) and a proton gradient subsequently used for ATP formation. It consists of a core antenna complex that captures photons, and an electron transfer chain that converts photonic excitation into a charge separation. The sequence is that of Cytochrome b559 subunit beta from Thalassiosira pseudonana (Marine diatom).